The following is a 140-amino-acid chain: 3-hydroxyacyl-[acyl-carrier-protein] dehydratase FabZ (140 aa).

Residue His-48 is part of the active site.

Belongs to the thioester dehydratase family. FabZ subfamily.

It is found in the cytoplasm. It catalyses the reaction a (3R)-hydroxyacyl-[ACP] = a (2E)-enoyl-[ACP] + H2O. Its function is as follows. Involved in unsaturated fatty acids biosynthesis. Catalyzes the dehydration of short chain beta-hydroxyacyl-ACPs and long chain saturated and unsaturated beta-hydroxyacyl-ACPs. This is 3-hydroxyacyl-[acyl-carrier-protein] dehydratase FabZ from Caldicellulosiruptor bescii (strain ATCC BAA-1888 / DSM 6725 / KCTC 15123 / Z-1320) (Anaerocellum thermophilum).